A 1190-amino-acid chain; its full sequence is Phosphatidylinositol-3,5-bisphosphate 3-phosphatase MTMR4 (1190 aa).

A Phosphoserine modification is found at S8. The region spanning 153–570 (EHIRCRQEAE…RALHLWTAVY (418 aa)) is the Myotubularin phosphatase domain. Residues N320, N345, and I346 each coordinate a 1,2-diacyl-sn-glycero-3-phospho-(1D-myo-inositol-3,5-bisphosphate). A 1,2-diacyl-sn-glycero-3-phospho-(1D-myo-inositol-3-phosphate) contacts are provided by N320, N345, and I346. The active-site Phosphocysteine intermediate is the C407. The a 1,2-diacyl-sn-glycero-3-phospho-(1D-myo-inositol-3,5-bisphosphate) site is built by S408, D409, G410, W411, D412, R413, K449, and R453. 6 residues coordinate a 1,2-diacyl-sn-glycero-3-phospho-(1D-myo-inositol-3-phosphate): S408, D409, G410, W411, D412, and R413. R453 contacts a 1,2-diacyl-sn-glycero-3-phospho-(1D-myo-inositol-3-phosphate). A phosphoserine mark is found at S610 and S629. Disordered regions lie at residues 616 to 694 (SACD…FKGH), 724 to 749 (ETEA…GKPP), and 773 to 848 (DFPE…PSSV). Polar residues predominate over residues 618–637 (CDTSSPLTRTSSDPNLNNHS). The span at 782-847 (LTGTPQQPHL…SISHQEQPSS (66 aa)) shows a compositional bias: polar residues. A PY-motif; substrate motif for NEDD4 motif is present at residues 999–1003 (VPPLY). A coiled-coil region spans residues 1020–1052 (LRQIEAGYRQEVEQLRRQVRELQMRLDIRHCCA). An FYVE-type zinc finger spans residues 1109 to 1169 (DHMASHCFNC…VCNSCYEHIQ (61 aa)). Zn(2+) is bound by residues C1115, C1118, C1131, C1134, C1139, C1142, C1161, and C1164.

It belongs to the protein-tyrosine phosphatase family. Non-receptor class myotubularin subfamily. As to quaternary structure, homooligomeric. Forms MTMR3:MTMR4 heterooligomers; regulates the localization of both proteins. The MTMR3:MTMR4 heterooligomer can also recruit both CEP55 and PLK1; occurs during early mitosis, regulates the phosphorylation of CEP55 by PLK1 and its recruitment to the midbody where it can mediate cell abscission. Interacts with SMAD2 and SMAD3; negatively regulates TGF-beta signaling through SMAD2 and SMAD3 dephosphorylation and retention in endosomes. Interacts with SMAD1; negatively regulates BMP signaling through SMAD1 dephosphorylation and retention in endosomes. In terms of processing, ubiquitinated. Ubiquitination by NEDD4 probably leads to proteasomal degradation. Phosphorylated by CDK1 during mitosis.

It is found in the early endosome membrane. The protein resides in the recycling endosome membrane. The protein localises to the late endosome membrane. It localises to the cytoplasmic vesicle. Its subcellular location is the phagosome membrane. The enzyme catalyses a 1,2-diacyl-sn-glycero-3-phospho-(1D-myo-inositol-3-phosphate) + H2O = a 1,2-diacyl-sn-glycero-3-phospho-(1D-myo-inositol) + phosphate. It catalyses the reaction a 1,2-diacyl-sn-glycero-3-phospho-(1D-myo-inositol-3,5-bisphosphate) + H2O = a 1,2-diacyl-sn-glycero-3-phospho-(1D-myo-inositol-5-phosphate) + phosphate. It carries out the reaction 1,2-dioctanoyl-sn-glycero-3-phospho-(1-D-myo-inositol-3-phosphate) + H2O = 1,2-dioctanoyl-sn-glycero-3-phospho-(1D-myo-inositol) + phosphate. The catalysed reaction is 1,2-dioctanoyl-sn-glycero-3-phospho-(1D-myo-inositol-3,5-bisphosphate) + H2O = 1,2-dioctanoyl-sn-glycero-3-phospho-(1D-myo-inositol-5-phosphate) + phosphate. In terms of biological role, lipid phosphatase that specifically dephosphorylates the D-3 position of phosphatidylinositol 3-phosphate and phosphatidylinositol 3,5-bisphosphate, generating phosphatidylinositol and phosphatidylinositol 5-phosphate. Decreases the levels of phosphatidylinositol 3-phosphate, a phospholipid found in cell membranes where it acts as key regulator of both cell signaling and intracellular membrane traffic, in a subset of endosomal membranes to negatively regulate both endocytic recycling and trafficking and/or maturation of endosomes toward lysosomes. Through phosphatidylinositol 3-phosphate turnover in phagosome membranes regulates phagocytosis and phagosome maturation. By decreasing phosphatidylinositol 3-monophosphate (PI3P) levels in immune cells it can also regulate the innate immune response. Beside its lipid phosphatase activity, can also function as a molecular adapter to regulate midbody abscission during mitotic cytokinesis. Can also negatively regulate TGF-beta and BMP signaling through Smad proteins dephosphorylation and retention in endosomes. The polypeptide is Phosphatidylinositol-3,5-bisphosphate 3-phosphatase MTMR4 (Mus musculus (Mouse)).